The following is a 1958-amino-acid chain: Rho GTPase-activating protein 21 (1958 aa).

The segment at 1–42 (MMATRRTGLSEGDGDKLKACEVSKNKDGKEQSETVSLSEDET) is disordered. Basic and acidic residues predominate over residues 13 to 32 (DGDKLKACEVSKNKDGKEQS). Phosphoserine occurs at positions 36 and 57. A PDZ domain is found at 50 to 159 (TVTLKRTSQG…TLELSVMPKD (110 aa)). Composition is skewed to polar residues over residues 286-295 (SNRNNHTGPS), 306-325 (SEQTSLKTVSRTTSPPLSIP), and 418-436 (ASQSTTDYNQVVPNRTTLQ). Disordered regions lie at residues 286–325 (SNRNNHTGPSHRTEEVRYGVSEQTSLKTVSRTTSPPLSIP) and 418–458 (ASQS…QRSV). The segment covering 448–458 (PQSVQIRQRSV) has biased composition (low complexity). Ser-459 carries the phosphoserine modification. 2 positions are modified to omega-N-methylarginine: Arg-554 and Arg-575. Residues Ser-612, Ser-616, and Ser-625 each carry the phosphoserine modification. The segment covering 659-687 (SLLNQQTWVRTDSAPDQQVETGKSPSLSG) has biased composition (polar residues). Residues 659–751 (SLLNQQTWVR…PSGRQTPQPL (93 aa)) are disordered. The residue at position 717 (Ser-717) is a Phosphoserine. Residues 729–742 (LDNKEAVILREKPP) are compositionally biased toward basic and acidic residues. Thr-747 is modified (phosphothreonine). 3 positions are modified to phosphoserine: Ser-857, Ser-862, and Ser-881. Residues 859-885 (DHESVGPPSLDAQPNSKTERSKSYDEG) are disordered. Over residues 875 to 885 (KTERSKSYDEG) the composition is skewed to basic and acidic residues. Residue Tyr-882 is modified to Phosphotyrosine. Phosphoserine is present on residues Ser-924, Ser-926, Ser-954, Ser-1099, and Ser-1115. Residues 930–1097 (SDAAKEGWLH…AKSEPKTQSP (168 aa)) are interaction with ARF1 and ARF6. One can recognise a PH domain in the interval 931-1040 (DAAKEGWLHF…WIKTIQESSN (110 aa)). Positions 1086-1133 (LGAKSEPKTQSPHSPKEESERKLLSKDDTSPPKDKGTWRKGIPSIMRK) are disordered. Residues 1099 to 1122 (SPKEESERKLLSKDDTSPPKDKGT) show a composition bias toward basic and acidic residues. Residues 1147–1339 (VRLDDCPPAH…TLIQHHDWFF (193 aa)) enclose the Rho-GAP domain. Disordered stretches follow at residues 1348-1401 (LTTV…GSGK), 1418-1575 (SRKR…KHSE), 1598-1642 (SLDS…SEFP), and 1655-1686 (RGKLQEVTKSSRRNSEGSELSCTEGSLTSSLD). Residues 1349–1362 (TTVQEESTVDSQPV) show a composition bias toward polar residues. Low complexity predominate over residues 1383 to 1401 (SDSATSDSTKSKGSWGSGK). 3 positions are modified to phosphoserine: Ser-1418, Ser-1432, and Ser-1433. Composition is skewed to basic and acidic residues over residues 1441–1466 (FFKKENVEQCHNDTKEESKKESETLG) and 1477–1493 (NSTRKDPSTTKDEKISL). Lys-1444 is covalently cross-linked (Glycyl lysine isopeptide (Lys-Gly) (interchain with G-Cter in SUMO)). Ser-1504 is modified (phosphoserine). Phosphothreonine is present on Thr-1516. At Ser-1527 the chain carries Phosphoserine. The span at 1544 to 1559 (SDSGTLLSTSSQASLA) shows a compositional bias: low complexity. Residues 1592 to 1861 (SATYLTSLDS…WLARERLRTS (270 aa)) are interaction with CTNNA1. Residues 1603–1612 (RLSPEVQSVA) are compositionally biased toward polar residues. The segment covering 1624 to 1634 (SELISEGRPVE) has biased composition (basic and acidic residues). Ser-1669 is subject to Phosphoserine. A compositionally biased stretch (polar residues) spans 1671–1686 (GSELSCTEGSLTSSLD). Thr-1682 is subject to Phosphothreonine. Position 1742 is a phosphoserine (Ser-1742). The tract at residues 1860–1958 (TSTSDLSRGE…GSKAEFHPCL (99 aa)) is disordered. The span at 1874 to 1909 (QTENPSTREIATTDTPLSLHCNTGSSSSTLASTNRP) shows a compositional bias: polar residues. Position 1917 is a phosphoserine (Ser-1917). Positions 1918-1931 (PDQINGESFQNVSK) are enriched in polar residues.

In terms of assembly, interacts with GTP-bound ARF1 and ARF6. Interacts with CTNNA1. Sumoylated with SUMO2 and SUMO3 in proliferating lymphocytes. As to expression, widely expressed with higher expression in brain, heart, skeletal muscle and placenta.

The protein resides in the golgi apparatus membrane. It is found in the cell junction. Its subcellular location is the cytoplasmic vesicle membrane. The protein localises to the cytoplasm. It localises to the cytoskeleton. Its function is as follows. Functions as a GTPase-activating protein (GAP) for RHOA and CDC42. Downstream partner of ARF1 which may control Golgi apparatus structure and function. Also required for CTNNA1 recruitment to adherens junctions. This chain is Rho GTPase-activating protein 21 (ARHGAP21), found in Homo sapiens (Human).